The primary structure comprises 314 residues: Ribosomal RNA small subunit methyltransferase H (314 aa).

S-adenosyl-L-methionine contacts are provided by residues 33-35 (GGH), Asp-52, Phe-84, Asp-105, and Gln-112.

This sequence belongs to the methyltransferase superfamily. RsmH family.

It is found in the cytoplasm. It catalyses the reaction cytidine(1402) in 16S rRNA + S-adenosyl-L-methionine = N(4)-methylcytidine(1402) in 16S rRNA + S-adenosyl-L-homocysteine + H(+). In terms of biological role, specifically methylates the N4 position of cytidine in position 1402 (C1402) of 16S rRNA. The chain is Ribosomal RNA small subunit methyltransferase H from Lactobacillus delbrueckii subsp. bulgaricus (strain ATCC 11842 / DSM 20081 / BCRC 10696 / JCM 1002 / NBRC 13953 / NCIMB 11778 / NCTC 12712 / WDCM 00102 / Lb 14).